A 475-amino-acid polypeptide reads, in one-letter code: Isocitrate dehydrogenase [NADP] (475 aa).

Thr-104 provides a ligand contact to NADP(+). The D-threo-isocitrate site is built by Ser-113, Asn-115, Arg-119, Arg-129, and Arg-153. Asp-362 is a Mg(2+) binding site. NADP(+) contacts are provided by residues 394-400 (HGTAPKH), Asn-407, Tyr-446, and Arg-450.

It belongs to the isocitrate and isopropylmalate dehydrogenases family. In terms of assembly, homodimer. Mg(2+) is required as a cofactor. The cofactor is Mn(2+).

Its subcellular location is the cytoplasm. The catalysed reaction is D-threo-isocitrate + NADP(+) = 2-oxoglutarate + CO2 + NADPH. Inhibited non-competitively by ADP and 2-oxoglutarate, with respect to isocitrate and in a competitive manner by NADPH. Functionally, catalyzes the oxidative decarboxylation of isocitrate to 2-oxoglutarate and carbon dioxide with the concomitant reduction of NADP(+). Is specific for NADP(+), cannot use NAD(+). This is Isocitrate dehydrogenase [NADP] from Synechocystis sp. (strain ATCC 27184 / PCC 6803 / Kazusa).